We begin with the raw amino-acid sequence, 311 residues long: Ribonuclease 3 (311 aa).

In terms of domain architecture, RNase III spans 20-145; sequence YLCFYRILGF…FIGAIYLDQG (126 aa). Residue Glu62 coordinates Mg(2+). Asp66 is an active-site residue. Positions 131 and 134 each coordinate Mg(2+). Glu134 is a catalytic residue. The 70-residue stretch at 173–242 folds into the DRBM domain; that stretch reads NFKSKLIEWS…AQMAIKKVKD (70 aa). Residues 250 to 311 form a disordered region; sequence NEAKSQHSKP…EVEATETEKE (62 aa). The span at 262-288 shows a compositional bias: acidic residues; sequence VETESVEPELTESETMEPDTLETEAPE.

It belongs to the ribonuclease III family. Homodimer. Mg(2+) is required as a cofactor.

It localises to the cytoplasm. It carries out the reaction Endonucleolytic cleavage to 5'-phosphomonoester.. Its function is as follows. Digests double-stranded RNA. Involved in the processing of primary rRNA transcript to yield the immediate precursors to the large and small rRNAs (23S and 16S). Processes some mRNAs, and tRNAs when they are encoded in the rRNA operon. Processes pre-crRNA and tracrRNA of type II CRISPR loci if present in the organism. In Bacteroides thetaiotaomicron (strain ATCC 29148 / DSM 2079 / JCM 5827 / CCUG 10774 / NCTC 10582 / VPI-5482 / E50), this protein is Ribonuclease 3.